Here is a 269-residue protein sequence, read N- to C-terminus: Pertussis toxin subunit 1 (269 aa).

The N-terminal stretch at 1–34 (MRCTRAIRQTARTGWLTWLAILAVTAPVTSPAWA) is a signal peptide. Tryptophan 60 lines the NAD(+) pocket. Active-site residues include histidine 69 and glutamate 163. Residues cysteine 75 and cysteine 235 are joined by a disulfide bond.

The protein belongs to the bacterial exotoxin subunit A family. In terms of assembly, pertussis toxin contains five different chains, S1-S5. They are organized into 2 functional subunits: A, composed of S1 (which is toxic) and B, containing S2, S3, S5, and two copies of S4 (B binds to the membrane receptors). Dimers of S2-S4 and S3-S4 are held together by S5.

The protein localises to the secreted. Functionally, S1 is an NAD-dependent ADP-ribosyltransferase, which plays a crucial role in the pathogenesis of B.pertussis causing disruption of normal host cellular regulation. It catalyzes the ADP-ribosylation of a cysteine in the alpha subunit of host heterotrimeric G proteins. In the absence of G proteins it also catalyzes the cleavage of NAD(+) into ADP-ribose and nicotinamide. It irreversibly uncouples the G-alpha GTP-binding proteins from their membrane receptors. This Bordetella pertussis (strain Tohama I / ATCC BAA-589 / NCTC 13251) protein is Pertussis toxin subunit 1 (ptxA).